The primary structure comprises 361 residues: Ribosomal RNA large subunit methyltransferase M (361 aa).

Residues S187, 220 to 223 (CPGG), D239, D259, and D276 contribute to the S-adenosyl-L-methionine site. K305 (proton acceptor) is an active-site residue.

This sequence belongs to the class I-like SAM-binding methyltransferase superfamily. RNA methyltransferase RlmE family. RlmM subfamily. In terms of assembly, monomer.

The protein resides in the cytoplasm. The catalysed reaction is cytidine(2498) in 23S rRNA + S-adenosyl-L-methionine = 2'-O-methylcytidine(2498) in 23S rRNA + S-adenosyl-L-homocysteine + H(+). Functionally, catalyzes the 2'-O-methylation at nucleotide C2498 in 23S rRNA. In Shewanella sp. (strain ANA-3), this protein is Ribosomal RNA large subunit methyltransferase M.